A 489-amino-acid chain; its full sequence is Valine--tRNA ligase (489 aa).

Positions 482–486 (KMSKS) match the 'KMSKS' region motif. K485 is an ATP binding site.

This sequence belongs to the class-I aminoacyl-tRNA synthetase family.

The enzyme catalyses tRNA(Val) + L-valine + ATP = L-valyl-tRNA(Val) + AMP + diphosphate. The protein is Valine--tRNA ligase (VALS) of Trichomonas vaginalis.